The sequence spans 382 residues: Alcohol dehydrogenase 1 (382 aa).

The Zn(2+) site is built by C49, T51, H71, C101, C104, C107, C115, and C179. T51 and H71 together coordinate an alcohol. T51 is a binding site for NAD(+). NAD(+) is bound by residues 204 to 209 (GLGAVG), D228, R233, T275, V298, 298 to 300 (VGV), F325, and R375.

This sequence belongs to the zinc-containing alcohol dehydrogenase family. Homodimer. Zn(2+) serves as cofactor.

It is found in the cytoplasm. It catalyses the reaction a primary alcohol + NAD(+) = an aldehyde + NADH + H(+). It carries out the reaction a secondary alcohol + NAD(+) = a ketone + NADH + H(+). Its function is as follows. This protein is responsible for the conversion of alcohols to aldehydes in plants and is important for NAD metabolism during anaerobic respiration. The sequence is that of Alcohol dehydrogenase 1 (ADH1) from Petunia hybrida (Petunia).